A 522-amino-acid polypeptide reads, in one-letter code: Neuropeptide FF receptor 2 (522 aa).

Topologically, residues 1-147 (MNSFFGTPAA…NYYLHQPQVA (147 aa)) are extracellular. The interval 25-49 (KEAGRERRALSVQQRGGPAWSGSLE) is disordered. Residues Asn-110, Asn-122, and Asn-133 are each glycosylated (N-linked (GlcNAc...) asparagine). Residues 148 to 168 (AIFIISYFLIFFLCMMGNTVV) form a helical membrane-spanning segment. The Cytoplasmic portion of the chain corresponds to 169-184 (CFIVMRNKHMHTVTNL). The chain crosses the membrane as a helical span at residues 185–205 (FILNLAISDLLVGIFCMPITL). Residues 206–221 (LDNIIAGWPFGNTMCK) are Extracellular-facing. Cys-220 and Cys-308 form a disulfide bridge. A helical transmembrane segment spans residues 222 to 242 (ISGLVQGISVAASVFTLVAIA). Over 243–262 (VDRFQCVVYPFKPKLTIKTA) the chain is Cytoplasmic. The chain crosses the membrane as a helical span at residues 263–283 (FVIIMIIWVLAITIMSPSAVM). The Extracellular portion of the chain corresponds to 284–319 (LHVQEEKYYRVRLNSQNKTSPVYWCREDWPNQEMRK). An N-linked (GlcNAc...) asparagine glycan is attached at Asn-300. A helical membrane pass occupies residues 320-340 (IYTTVLFANIYLAPLSLIVIM). Topologically, residues 341-377 (YGRIGISLFRAAVPHTGRKNQEQWHVVSRKKQKIIKM) are cytoplasmic. Residues 378 to 398 (LLIVALLFILSWLPLWTLMML) form a helical membrane-spanning segment. Over 399-413 (SDYADLSPNELQIIN) the chain is Extracellular. The helical transmembrane segment at 414–434 (IYIYPFAHWLAFGNSSVNPII) threads the bilayer. Over 435-522 (YGFFNENFRR…LKETTNSSEI (88 aa)) the chain is Cytoplasmic.

Belongs to the G-protein coupled receptor 1 family. As to expression, isoform 1 is abundant in placenta. Relatively highly expressed in thymus, testis, and small intestine. Expressed at low levels in several tissues including spleen, prostate, brain, heart, ovary, colon, kidney, lung, liver and pancreas and not expressed in skeletal muscle and leukocytes. Isoform 2 expression is highest in placenta (but at relatively low level compared to isoform 1). Very low level of expression in numerous tissues including adipose tissue and many brain regions. Isoform 3 is expressed in brain and heart and, at lower levels, in kidney, liver, lung and pancreas.

The protein resides in the cell membrane. Receptor for NPAF (A-18-F-amide) and NPFF (F-8-F-amide) neuropeptides, also known as morphine-modulating peptides. Can also be activated by a variety of naturally occurring or synthetic FMRF-amide like ligands. This receptor mediates its action by association with G proteins that activate a phosphatidylinositol-calcium second messenger system. This Homo sapiens (Human) protein is Neuropeptide FF receptor 2.